The chain runs to 440 residues: Golgi reassembly-stacking protein 1 (440 aa).

Glycine 2 carries N-myristoyl glycine lipidation. PDZ GRASP-type domains follow at residues 15–105 (EGFH…FCSF) and 111–199 (QVWH…YGYL). A GRASP region spans residues 15 to 215 (EGFHLHGVQE…PPSYHKKPPG (201 aa)). Residues histidine 18, histidine 20, and cysteine 103 each coordinate Zn(2+). Residues 190-202 (LGCGIGYGYLHRI) form an essential for interaction with GOLGA2/GM130 region. Disordered stretches follow at residues 205–248 (QPPS…ETGS), 261–301 (PGSS…PVQR), and 327–440 (LPSS…STTE). Positions 214 to 239 (PGTPPPSALPLGAPPPDALPPGPTPE) are enriched in pro residues. Threonine 216 is modified (phosphothreonine). Residues 327–336 (LPSSTELTTT) are compositionally biased toward low complexity. Over residues 337-351 (AVSTSGPEDICSSSS) the composition is skewed to polar residues. Phosphoserine occurs at positions 362, 364, and 373.

Belongs to the GORASP family. As to quaternary structure, homodimer. Forms higher-order oligomers under interphase but not mitotic conditions. Dimers of the protein on one membrane might be able to interact with dimers on another and so stack cisternae. Interacts with the C-terminus of GOLGA2/GM130 under both mitotic and non-mitotic conditions. The interaction is critical for the correct targeting of both proteins to the cis-Golgi. Interacts with TMED2 and TMED3. Phosphorylated by CDC2/B1 and PLK kinases during mitosis. Phosphorylation cycle correlates with the cisternal stacking cycle. Phosphorylation of the homodimer prevents the association of dimers into higher-order oligomers, leading to cisternal unstacking. Post-translationally, target for caspase-3 cleavage during apoptosis. The cleavage contributes to Golgi fragmentation and occurs very early in the execution phase of apoptosis. In terms of processing, myristoylated.

The protein localises to the golgi apparatus. The protein resides in the cis-Golgi network membrane. Its subcellular location is the endoplasmic reticulum-Golgi intermediate compartment membrane. Key structural protein of the Golgi apparatus. The membrane cisternae of the Golgi apparatus adhere to each other to form stacks, which are aligned side by side to form the Golgi ribbon. Acting in concert with GORASP2/GRASP55, is required for the formation and maintenance of the Golgi ribbon, and may be dispensable for the formation of stacks. However, other studies suggest that GORASP1 plays an important role in assembly and membrane stacking of the cisternae, and in the reassembly of Golgi stacks after breakdown during mitosis. Caspase-mediated cleavage of GORASP1 is required for fragmentation of the Golgi during apoptosis. Also mediates, via its interaction with GOLGA2/GM130, the docking of transport vesicles with the Golgi membranes. Mediates ER stress-induced unconventional (ER/Golgi-independent) trafficking of core-glycosylated CFTR to cell membrane. In Homo sapiens (Human), this protein is Golgi reassembly-stacking protein 1 (GORASP1).